Here is a 230-residue protein sequence, read N- to C-terminus: Putative N-acetylmannosamine-6-phosphate 2-epimerase (230 aa).

It belongs to the NanE family.

It catalyses the reaction an N-acyl-D-glucosamine 6-phosphate = an N-acyl-D-mannosamine 6-phosphate. It functions in the pathway amino-sugar metabolism; N-acetylneuraminate degradation; D-fructose 6-phosphate from N-acetylneuraminate: step 3/5. Functionally, converts N-acetylmannosamine-6-phosphate (ManNAc-6-P) to N-acetylglucosamine-6-phosphate (GlcNAc-6-P). The chain is Putative N-acetylmannosamine-6-phosphate 2-epimerase from Malacoplasma penetrans (strain HF-2) (Mycoplasma penetrans).